The sequence spans 419 residues: Tyrosine--tRNA ligase (419 aa).

Tyrosine 34 provides a ligand contact to L-tyrosine. The short motif at 39-48 (PSGDSMHIGH) is the 'HIGH' region element. Tyrosine 168 and glutamine 172 together coordinate L-tyrosine. The 'KMSKS' region signature appears at 230-234 (KFGKS). Lysine 233 contributes to the ATP binding site. The region spanning 352–418 (ANLVDWLVTL…GKKKYFLVSY (67 aa)) is the S4 RNA-binding domain.

It belongs to the class-I aminoacyl-tRNA synthetase family. TyrS type 1 subfamily. Homodimer.

It is found in the cytoplasm. The catalysed reaction is tRNA(Tyr) + L-tyrosine + ATP = L-tyrosyl-tRNA(Tyr) + AMP + diphosphate + H(+). In terms of biological role, catalyzes the attachment of tyrosine to tRNA(Tyr) in a two-step reaction: tyrosine is first activated by ATP to form Tyr-AMP and then transferred to the acceptor end of tRNA(Tyr). The sequence is that of Tyrosine--tRNA ligase from Listeria monocytogenes serotype 4a (strain HCC23).